A 477-amino-acid chain; its full sequence is Shikimate biosynthesis protein AroDE (477 aa).

The segment at 1 to 209 is 3-dehydroquinate dehydratase; sequence MLCATVSGPS…LEELLSYNYS (209 aa). 3-dehydroquinate-binding positions include S21, 29 to 31, and 56 to 58; these read ELR and TFR. The Proton donor/acceptor; for 3-dehydroquinate dehydratase activity role is filled by H111. Catalysis depends on K134, which acts as the Schiff-base intermediate with substrate; for 3-dehydroquinate dehydratase activity. The 3-dehydroquinate site is built by R172 and Q197. The interval 210-477 is shikimate 5-dehydrogenase; it reads KLSEKSHIYG…NYVKNFMAKV (268 aa). 228–230 serves as a coordination point for shikimate; the sequence is SIS. Catalysis depends on K279, which acts as the Proton acceptor; for shikimate dehydrogenase activity. Positions 300 and 315 each coordinate shikimate. NADP(+) is bound by residues 339-343, 362-364, and G438; these read GAGGA and NRT. Q445 contacts shikimate.

The protein in the N-terminal section; belongs to the type-I 3-dehydroquinase family. In the C-terminal section; belongs to the shikimate dehydrogenase family.

It carries out the reaction 3-dehydroquinate = 3-dehydroshikimate + H2O. The enzyme catalyses shikimate + NADP(+) = 3-dehydroshikimate + NADPH + H(+). It functions in the pathway metabolic intermediate biosynthesis; chorismate biosynthesis; chorismate from D-erythrose 4-phosphate and phosphoenolpyruvate: step 3/7. It participates in metabolic intermediate biosynthesis; chorismate biosynthesis; chorismate from D-erythrose 4-phosphate and phosphoenolpyruvate: step 4/7. Its function is as follows. Bifunctional enzyme that catalyzes two sequential steps of the aromatic amino acids biosynthetic pathway. In the first reaction, the AroD domain catalyzes the cis-dehydration of 3-dehydroquinate (DHQ) and introduces the first double bond of the aromatic ring to yield 3-dehydroshikimate; in the second reaction, the AroE domain catalyzes the reversible NADPH linked reduction of 3-dehydroshikimate (DHSA) to yield shikimate (SA). The protein is Shikimate biosynthesis protein AroDE of Chlamydia pneumoniae (Chlamydophila pneumoniae).